The chain runs to 381 residues: GDP-mannose-dependent alpha-(1-6)-phosphatidylinositol dimannoside mannosyltransferase (381 aa).

Substrate contacts are provided by residues glycine 16, arginine 207, 211–212 (EK), 283–287 (ETFGL), and glutamate 291.

The protein belongs to the glycosyltransferase group 1 family. Glycosyltransferase 4 subfamily.

It functions in the pathway phospholipid metabolism; phosphatidylinositol metabolism. In terms of biological role, catalyzes the addition of a mannose residue from GDP-D-mannose to the position 6 of the alpha-1,6-linked mannose residue of the triacyl phosphatidylinositol dimannoside (Ac3PIM2) to generate triacyl phosphatidylinositol trimannoside (Ac3PIM3). This is GDP-mannose-dependent alpha-(1-6)-phosphatidylinositol dimannoside mannosyltransferase (pimC) from Mycobacterium tuberculosis (strain ATCC 25177 / H37Ra).